A 378-amino-acid chain; its full sequence is Leukocyte elastase inhibitor (378 aa).

Met1 is subject to N-acetylmethionine. Lys137 is modified (N6-acetyllysine). Ser299 carries the phosphoserine modification. A CARD-binding motif (CBM) region spans residues 350 to 378 (DFIADHPFIFFIRHNPSSNILFLGRLSSP).

This sequence belongs to the serpin family. Ov-serpin subfamily. Monomer. Interacts (via C-terminus) with CASP1; CASP4 (via CARD domain) and CASP5; these interactions regulate the activity of inflammatory caspases. Interacts with PRTN3. Interacts with GZMH.

The protein resides in the secreted. It localises to the cytoplasm. Its subcellular location is the cytolytic granule. The protein localises to the early endosome. Functionally, neutrophil serine protease inhibitor that plays an essential role in the regulation of the innate immune response, inflammation and cellular homeostasis. Acts primarily to protect the cell from proteases released in the cytoplasm during stress or infection. These proteases are important in killing microbes but when released from granules, these potent enzymes also destroy host proteins and contribute to mortality. Regulates the activity of the neutrophil proteases elastase, cathepsin G, proteinase-3, chymase, chymotrypsin, and kallikrein-3. Also acts as a potent intracellular inhibitor of GZMH by directly blocking its proteolytic activity. During inflammation, limits the activity of inflammatory caspases CASP1, CASP4 and CASP5 by suppressing their caspase-recruitment domain (CARD) oligomerization and enzymatic activation. When secreted, promotes the proliferation of beta-cells via its protease inhibitory function. In terms of biological role, may be cleaved leading to a loss of its anti-protease activity and to the appearance of an endonuclease activity. However no catalytic site was identified. In Sus scrofa (Pig), this protein is Leukocyte elastase inhibitor (SERPINB1).